The chain runs to 99 residues: Putative pterin-4-alpha-carbinolamine dehydratase (99 aa).

The protein belongs to the pterin-4-alpha-carbinolamine dehydratase family.

The enzyme catalyses (4aS,6R)-4a-hydroxy-L-erythro-5,6,7,8-tetrahydrobiopterin = (6R)-L-erythro-6,7-dihydrobiopterin + H2O. This Bradyrhizobium sp. (strain BTAi1 / ATCC BAA-1182) protein is Putative pterin-4-alpha-carbinolamine dehydratase.